Here is a 421-residue protein sequence, read N- to C-terminus: UDP-N-acetylglucosamine 1-carboxyvinyltransferase (421 aa).

22-23 (KN) is a phosphoenolpyruvate binding site. R93 is a UDP-N-acetyl-alpha-D-glucosamine binding site. C117 serves as the catalytic Proton donor. C117 bears the 2-(S-cysteinyl)pyruvic acid O-phosphothioketal mark. Residues 122–126 (RPVDL), D308, and I330 each bind UDP-N-acetyl-alpha-D-glucosamine.

The protein belongs to the EPSP synthase family. MurA subfamily.

It localises to the cytoplasm. The enzyme catalyses phosphoenolpyruvate + UDP-N-acetyl-alpha-D-glucosamine = UDP-N-acetyl-3-O-(1-carboxyvinyl)-alpha-D-glucosamine + phosphate. It participates in cell wall biogenesis; peptidoglycan biosynthesis. Cell wall formation. Adds enolpyruvyl to UDP-N-acetylglucosamine. This Pseudomonas putida (strain W619) protein is UDP-N-acetylglucosamine 1-carboxyvinyltransferase.